We begin with the raw amino-acid sequence, 259 residues long: Phosphate import ATP-binding protein PstB (259 aa).

Residues 10-254 enclose the ABC transporter domain; the sequence is AESRNLSFYY…PSRKETEDYI (245 aa). ATP is bound at residue 43–50; sequence GPSGCGKS.

The protein belongs to the ABC transporter superfamily. Phosphate importer (TC 3.A.1.7) family. As to quaternary structure, the complex is composed of two ATP-binding proteins (PstB), two transmembrane proteins (PstC and PstA) and a solute-binding protein (PstS).

It localises to the cell inner membrane. The enzyme catalyses phosphate(out) + ATP + H2O = ADP + 2 phosphate(in) + H(+). In terms of biological role, part of the ABC transporter complex PstSACB involved in phosphate import. Responsible for energy coupling to the transport system. The protein is Phosphate import ATP-binding protein PstB of Methylobacillus flagellatus (strain ATCC 51484 / DSM 6875 / VKM B-1610 / KT).